The chain runs to 350 residues: Arabinogalactan endo-beta-1,4-galactanase A (350 aa).

Positions 1 to 17 (MILSSLLPLSLVTLTSA) are cleaved as a signal peptide. An N-linked (GlcNAc...) asparagine glycan is attached at Asn-129. Residue Glu-153 is the Proton donor of the active site. Glu-263 serves as the catalytic Nucleophile.

The protein belongs to the glycosyl hydrolase 53 family.

The protein resides in the secreted. It carries out the reaction The enzyme specifically hydrolyzes (1-&gt;4)-beta-D-galactosidic linkages in type I arabinogalactans.. Its function is as follows. Endogalactanase involved in the degradation of plant cell wall polysaccharides, and more particularly of hairy regions of pectin. This chain is Arabinogalactan endo-beta-1,4-galactanase A (galA), found in Emericella nidulans (strain FGSC A4 / ATCC 38163 / CBS 112.46 / NRRL 194 / M139) (Aspergillus nidulans).